The chain runs to 523 residues: MNEKQRLEQTGQIQTASHPADRKSDLERLKAKTTKDYEKYFTSVFLPPNLKEAKKRGKEEVQYVKDFTIPDEFRGMGRGRKFYIRTYGCQMNEHDTEVMAGIFMALGYEPTDRPEDANVILLNTCAIRENAENKVFGELGYLKPLKTTNPDLLLGVCGCMSQEEAVVNKILKQYQYVDLIFGTHNIHRLPYILHEAYMSKEMVVEVWSKEGDVVENLPKVRKGNIKAWVNIMYGCDKFCTYCIVPYTRGKERSRRPEDIIQEVRQLAAQGYKEITLLGQNVNAYGKDFNDIQYGLGDLMDELRKIDIARIRFTTSHPRDFDDRLIEVLAKRGNLVEHIHLPVQSGSTEILKMMGRKYTREEYLELVRKIKAAIPDVALTTDIIVGFPNETDEQFEETLSLYREVEFDSAYTFIYSPREGTPAAKMNDNVPMEVKKERLQRLNALVQEIAAKKMKQYEGQVVEVLVEGESKTNPDVLAGYTRKNKLVHFVGPKSLIGQLVNVRITQAKTWTLTGELANEAIEVN.

A disordered region spans residues 1–26 (MNEKQRLEQTGQIQTASHPADRKSDL). The span at 8–17 (EQTGQIQTAS) shows a compositional bias: polar residues. One can recognise an MTTase N-terminal domain in the interval 80 to 198 (RKFYIRTYGC…LPYILHEAYM (119 aa)). Cys-89, Cys-125, Cys-159, Cys-235, Cys-239, and Cys-242 together coordinate [4Fe-4S] cluster. A Radical SAM core domain is found at 221-451 (RKGNIKAWVN…NALVQEIAAK (231 aa)). The region spanning 454–517 (KQYEGQVVEV…TWTLTGELAN (64 aa)) is the TRAM domain.

This sequence belongs to the methylthiotransferase family. MiaB subfamily. Monomer. The cofactor is [4Fe-4S] cluster.

Its subcellular location is the cytoplasm. It catalyses the reaction N(6)-dimethylallyladenosine(37) in tRNA + (sulfur carrier)-SH + AH2 + 2 S-adenosyl-L-methionine = 2-methylsulfanyl-N(6)-dimethylallyladenosine(37) in tRNA + (sulfur carrier)-H + 5'-deoxyadenosine + L-methionine + A + S-adenosyl-L-homocysteine + 2 H(+). Its function is as follows. Catalyzes the methylthiolation of N6-(dimethylallyl)adenosine (i(6)A), leading to the formation of 2-methylthio-N6-(dimethylallyl)adenosine (ms(2)i(6)A) at position 37 in tRNAs that read codons beginning with uridine. This Geobacillus thermodenitrificans (strain NG80-2) protein is tRNA-2-methylthio-N(6)-dimethylallyladenosine synthase.